The primary structure comprises 91 residues: Small ribosomal subunit protein uS15 (91 aa).

This sequence belongs to the universal ribosomal protein uS15 family. In terms of assembly, part of the 30S ribosomal subunit. Forms a bridge to the 50S subunit in the 70S ribosome, contacting the 23S rRNA.

One of the primary rRNA binding proteins, it binds directly to 16S rRNA where it helps nucleate assembly of the platform of the 30S subunit by binding and bridging several RNA helices of the 16S rRNA. Functionally, forms an intersubunit bridge (bridge B4) with the 23S rRNA of the 50S subunit in the ribosome. This chain is Small ribosomal subunit protein uS15, found in Rickettsia peacockii (strain Rustic).